Reading from the N-terminus, the 339-residue chain is Phenylalanine--tRNA ligase alpha subunit (339 aa).

Glu254 provides a ligand contact to Mg(2+).

It belongs to the class-II aminoacyl-tRNA synthetase family. Phe-tRNA synthetase alpha subunit type 1 subfamily. As to quaternary structure, tetramer of two alpha and two beta subunits. The cofactor is Mg(2+).

The protein localises to the cytoplasm. The catalysed reaction is tRNA(Phe) + L-phenylalanine + ATP = L-phenylalanyl-tRNA(Phe) + AMP + diphosphate + H(+). In Acetivibrio thermocellus (strain ATCC 27405 / DSM 1237 / JCM 9322 / NBRC 103400 / NCIMB 10682 / NRRL B-4536 / VPI 7372) (Clostridium thermocellum), this protein is Phenylalanine--tRNA ligase alpha subunit.